Here is a 615-residue protein sequence, read N- to C-terminus: Leucine aminopeptidase 2 (615 aa).

A peptide contacts are provided by residues 139–141 (QCQ) and 271–276 (PYGGME). Residue His-300 coordinates Zn(2+). Catalysis depends on Glu-301, which acts as the Proton acceptor. Zn(2+)-binding residues include His-304 and Glu-323. Residue Tyr-386 is the Proton donor of the active site.

This sequence belongs to the peptidase M1 family. The cofactor is Zn(2+).

It localises to the cytoplasm. The protein resides in the nucleus. The enzyme catalyses an epoxide + H2O = an ethanediol. Its function is as follows. Aminopeptidase that preferentially cleaves di- and tripeptides. Also has low epoxide hydrolase activity (in vitro). Can hydrolyze the epoxide leukotriene LTA(4) but it forms preferentially 5,6-dihydroxy-7,9,11,14-eicosatetraenoic acid rather than the cytokine leukotriene B(4) as the product compared to the homologous mammalian enzyme (in vitro). This is Leucine aminopeptidase 2 from Aspergillus oryzae (strain ATCC 42149 / RIB 40) (Yellow koji mold).